Consider the following 382-residue polypeptide: 3-hydroxyisobutyryl-CoA hydrolase, mitochondrial (382 aa).

4 residues coordinate substrate: glutamate 117, glycine 142, glutamate 165, and aspartate 173.

This sequence belongs to the enoyl-CoA hydratase/isomerase family.

Its subcellular location is the mitochondrion. The catalysed reaction is 3-hydroxy-2-methylpropanoyl-CoA + H2O = 3-hydroxy-2-methylpropanoate + CoA + H(+). It functions in the pathway amino-acid degradation; L-valine degradation. Hydrolyzes 3-hydroxyisobutyryl-CoA (HIBYL-CoA), a saline catabolite. Has high activity toward isobutyryl-CoA. Could be an isobutyryl-CoA dehydrogenase that functions in valine catabolism. Also hydrolyzes 3-hydroxypropanoyl-CoA. This is 3-hydroxyisobutyryl-CoA hydrolase, mitochondrial (hibch) from Danio rerio (Zebrafish).